A 1201-amino-acid polypeptide reads, in one-letter code: MGEIKKKFVQWLEKLLIRLKEPNVKEESLFEDLSPSNDVDTDGKYSKALSWGLENKKVKNIALTGPYGSGKSSILNTFQKQYSREYSFLNISLATFNTDTDDMENKLEKSILQQMIYRVHDRTIPFSRFKRIKHIRTKSIIINLIFFFAFIIVGIYLFKPDALKGIYAETLVSRSLGTEDQQQIRLTILLALFFIVYPLLAYKRIYHFVRANLKLNKVTIANTTLEKNTGEENSSIFDKYLDEILYFFEASKYNVVIFEDLDRFNNIGIFERLRELNELINNSEQIDRRVVFIYAIKDDIFGDADTEKLTRDRTKFFDFIIPVIPIINASNSGDILKKKIKHSPYSDLINTHFLEDVTIYIDDMRVLKNIFNEFVIYQQKLSAIDLDPNKMLAMIIYKNIYPVDFSKLQYNKGLVYEIFQKKQLIIEEQIKLINAKIQQLERKLANIEVESLKSIAELNFIYLSELEISNLNSNYDINIDGEVFRGNTSNKDRFFEKLKNADTIYCYLRNRNGPATIKEIATVFGRKPNYFEREDAIKAIEKNEIQKFKKELLELEREKQEIRAQSLQVLITKMNSKDVFSDKLYEKKLLVYLLRHGYIDEMYNHYITYFYPESLSLSDIKFVFSIKNHESLPYSFELDNIGKIMSKLVGAEFKQIEVLNFHLLNYIMDHSEYRNYYDSIIERLANGSKESVTFIDGFKERAINKAAFIQSISSKWDDFWSFIELRSNYTQQKKEEYLSDILTYADIADIIRMNKESVMSFTLSKYLNLLSLVSDEEKIKELLLKLQVKFKSLDHLLNSETIYDFVVQRNLYEINIKTLSVILNDAPNITYAAVKNSDQQAVINYVNDNIDIFVEKVLLTEEIEEPEESFLELLNREDLDKRVKHAMIMKKTFAISDIGELIKELWPIVIRENKMVACWSNVITSYVEYNKKMPDFLIAFLNNPVNRKELSKNNIEAFDDKFDEAILEDISEEIINSRDITDETFEVLIASIQSWIYFPLGNVSEKRAKLLIDNDLLSLTPENFKELKLNFDTLHIQLALRNPDEFIDKQGDFSLDANDIKQLIDSNELSQFNKEIFVQHLNSNCLTDGNNDILKDTIYFINEHNLKITNELLTFLLESPTTLDTRLSLLAGQIKHIDNESITEFLTKIGEPYSEIAEKGRRIKISNNRTNKALVTALESKNYISSFKEDRERLRVNTKKK.

A helical membrane pass occupies residues 140–160 (IIINLIFFFAFIIVGIYLFKP). Coiled coils occupy residues 420-459 (QKKQ…AELN) and 536-574 (AIKA…ITKM).

The protein resides in the cell membrane. This is an uncharacterized protein from Bacillus subtilis (strain 168).